A 91-amino-acid polypeptide reads, in one-letter code: uncharacterized protein (91 aa).

This is an uncharacterized protein from Bacillus anthracis.